We begin with the raw amino-acid sequence, 161 residues long: 3-isopropylmalate dehydratase small subunit 1 (161 aa).

Belongs to the LeuD family. LeuD type 2 subfamily. Heterodimer of LeuC and LeuD.

The enzyme catalyses (2R,3S)-3-isopropylmalate = (2S)-2-isopropylmalate. It participates in amino-acid biosynthesis; L-leucine biosynthesis; L-leucine from 3-methyl-2-oxobutanoate: step 2/4. Catalyzes the isomerization between 2-isopropylmalate and 3-isopropylmalate, via the formation of 2-isopropylmaleate. This is 3-isopropylmalate dehydratase small subunit 1 (leuD1) from Archaeoglobus fulgidus (strain ATCC 49558 / DSM 4304 / JCM 9628 / NBRC 100126 / VC-16).